A 357-amino-acid chain; its full sequence is Uroporphyrinogen decarboxylase (357 aa).

Substrate-binding positions include 27–31, D77, Y154, S209, and H330; that span reads RQAGR.

The protein belongs to the uroporphyrinogen decarboxylase family. In terms of assembly, homodimer.

The protein localises to the cytoplasm. It carries out the reaction uroporphyrinogen III + 4 H(+) = coproporphyrinogen III + 4 CO2. Its pathway is porphyrin-containing compound metabolism; protoporphyrin-IX biosynthesis; coproporphyrinogen-III from 5-aminolevulinate: step 4/4. In terms of biological role, catalyzes the decarboxylation of four acetate groups of uroporphyrinogen-III to yield coproporphyrinogen-III. This chain is Uroporphyrinogen decarboxylase, found in Acinetobacter baumannii (strain ACICU).